Reading from the N-terminus, the 112-residue chain is MALKYVSSYLLAVAAGNENPSVDDLKKILDAVGSDVDEECLQGLVDSMSGKTVHETIAAGMTKLQSMPAGGAAMPAAAAGGAPAAAEDKAEAKKPEAEPEEEEDDMGFSLFD.

The span at 69-85 shows a compositional bias: low complexity; it reads AGGAAMPAAAAGGAPAA. The tract at residues 69–112 is disordered; the sequence is AGGAAMPAAAAGGAPAAAEDKAEAKKPEAEPEEEEDDMGFSLFD. The segment covering 86–97 has biased composition (basic and acidic residues); that stretch reads AEDKAEAKKPEA.

This sequence belongs to the eukaryotic ribosomal protein P1/P2 family. In terms of assembly, P1 and P2 exist as dimers at the large ribosomal subunit. In terms of processing, phosphorylated.

Functionally, plays an important role in the elongation step of protein synthesis. This chain is Large ribosomal subunit protein P2, found in Babesia bovis.